The sequence spans 110 residues: Large ribosomal subunit protein uL22 (110 aa).

Belongs to the universal ribosomal protein uL22 family. Part of the 50S ribosomal subunit.

This protein binds specifically to 23S rRNA; its binding is stimulated by other ribosomal proteins, e.g. L4, L17, and L20. It is important during the early stages of 50S assembly. It makes multiple contacts with different domains of the 23S rRNA in the assembled 50S subunit and ribosome. In terms of biological role, the globular domain of the protein is located near the polypeptide exit tunnel on the outside of the subunit, while an extended beta-hairpin is found that lines the wall of the exit tunnel in the center of the 70S ribosome. The sequence is that of Large ribosomal subunit protein uL22 from Mannheimia succiniciproducens (strain KCTC 0769BP / MBEL55E).